Consider the following 135-residue polypeptide: Succinate dehydrogenase assembly factor 2, mitochondrial (135 aa).

The protein belongs to the SDHAF2 family. Interacts with the flavoprotein subunit within the SDH catalytic dimer.

It is found in the mitochondrion matrix. Plays an essential role in the assembly of succinate dehydrogenase (SDH), an enzyme complex (also referred to as respiratory complex II) that is a component of both the tricarboxylic acid (TCA) cycle and the mitochondrial electron transport chain, and which couples the oxidation of succinate to fumarate with the reduction of ubiquinone (coenzyme Q) to ubiquinol. Required for flavinylation (covalent attachment of FAD) of the flavoprotein subunit of the SDH catalytic dimer. This Meyerozyma guilliermondii (strain ATCC 6260 / CBS 566 / DSM 6381 / JCM 1539 / NBRC 10279 / NRRL Y-324) (Yeast) protein is Succinate dehydrogenase assembly factor 2, mitochondrial.